A 324-amino-acid polypeptide reads, in one-letter code: MRAYTLIAPAKINLFLQIIGDHLQQDQPTGYHNLVMVLQSVSLSDELQLRPLSGEARSLRLDPPILLHCDHPQVPLDQTNLVYRAAALMWQKFPGQAGVEITLHKRIPIGAGLAGGSTDAAAVLVGLNLMWELGLTQLELQELGSQLGADVPFCIRGGTSLAVGRGDQLSPLPDLEGIYVVLGKYHDLSVSTPWAYQTYRQQFQASYAQTLEEQEQRRQQGGSGALLKAIAHRDGGQIGQLLHNDLEKVVLPAYPRVEYLRQQFANQSPLGTMMSGSGPTVFALADSAAAAEEIYAGVRGAIADPYLDLWICQLCNQGIQVQPL.

Lysine 11 is a catalytic residue. 108-118 provides a ligand contact to ATP; the sequence is PIGAGLAGGST. The active site involves aspartate 150.

The protein belongs to the GHMP kinase family. IspE subfamily.

It catalyses the reaction 4-CDP-2-C-methyl-D-erythritol + ATP = 4-CDP-2-C-methyl-D-erythritol 2-phosphate + ADP + H(+). The protein operates within isoprenoid biosynthesis; isopentenyl diphosphate biosynthesis via DXP pathway; isopentenyl diphosphate from 1-deoxy-D-xylulose 5-phosphate: step 3/6. Catalyzes the phosphorylation of the position 2 hydroxy group of 4-diphosphocytidyl-2C-methyl-D-erythritol. This chain is 4-diphosphocytidyl-2-C-methyl-D-erythritol kinase, found in Cyanothece sp. (strain PCC 7425 / ATCC 29141).